The primary structure comprises 313 residues: Putative S-adenosyl-L-methionine-dependent methyltransferase MAV_5149 (313 aa).

Residues Asp-135 and 164-165 (DL) contribute to the S-adenosyl-L-methionine site.

The protein belongs to the UPF0677 family.

Exhibits S-adenosyl-L-methionine-dependent methyltransferase activity. This chain is Putative S-adenosyl-L-methionine-dependent methyltransferase MAV_5149, found in Mycobacterium avium (strain 104).